Consider the following 274-residue polypeptide: Imidazole glycerol phosphate synthase subunit HisF (274 aa).

Catalysis depends on residues aspartate 11 and aspartate 134.

It belongs to the HisA/HisF family. In terms of assembly, heterodimer of HisH and HisF.

Its subcellular location is the cytoplasm. The enzyme catalyses 5-[(5-phospho-1-deoxy-D-ribulos-1-ylimino)methylamino]-1-(5-phospho-beta-D-ribosyl)imidazole-4-carboxamide + L-glutamine = D-erythro-1-(imidazol-4-yl)glycerol 3-phosphate + 5-amino-1-(5-phospho-beta-D-ribosyl)imidazole-4-carboxamide + L-glutamate + H(+). It participates in amino-acid biosynthesis; L-histidine biosynthesis; L-histidine from 5-phospho-alpha-D-ribose 1-diphosphate: step 5/9. Functionally, IGPS catalyzes the conversion of PRFAR and glutamine to IGP, AICAR and glutamate. The HisF subunit catalyzes the cyclization activity that produces IGP and AICAR from PRFAR using the ammonia provided by the HisH subunit. The protein is Imidazole glycerol phosphate synthase subunit HisF of Methanobrevibacter smithii (strain ATCC 35061 / DSM 861 / OCM 144 / PS).